The sequence spans 259 residues: NH(3)-dependent NAD(+) synthetase (259 aa).

Residue 33–40 (GLSGGIDS) coordinates ATP. Asp39 provides a ligand contact to Mg(2+). A deamido-NAD(+)-binding site is contributed by Arg119. ATP is bound at residue Thr139. A Mg(2+)-binding site is contributed by Glu144. 2 residues coordinate deamido-NAD(+): Lys152 and Asp159. Lys168 and Ser190 together coordinate ATP. A deamido-NAD(+)-binding site is contributed by 249–250 (HK).

It belongs to the NAD synthetase family. Homodimer.

It catalyses the reaction deamido-NAD(+) + NH4(+) + ATP = AMP + diphosphate + NAD(+) + H(+). Its pathway is cofactor biosynthesis; NAD(+) biosynthesis; NAD(+) from deamido-NAD(+) (ammonia route): step 1/1. Functionally, catalyzes the ATP-dependent amidation of deamido-NAD to form NAD. Uses ammonia as a nitrogen source. This Methanocaldococcus jannaschii (strain ATCC 43067 / DSM 2661 / JAL-1 / JCM 10045 / NBRC 100440) (Methanococcus jannaschii) protein is NH(3)-dependent NAD(+) synthetase.